The primary structure comprises 912 residues: Coatomer subunit beta (912 aa).

HEAT repeat units lie at residues 59–96 (PIPQLLMPIILYVMPSNDHTIKKLLLIYWEVIEKTHLG), 100–135 (SEMILVCNSLLNDLNHPNEFVRGSTLRFLCKLREAE), 136–172 (VLEPLVPSVRSNLENRHAYCRRNAVLAIYNIYSHFDY), 244–281 (SERSKYIKCIFTLLNSSSPAVKYESAGTLLSLSSAPTA), 300–337 (NVKMIVLDKLIEIKKNHSKIMEELVMDILRALSSPNID), 339–375 (CKKVLNIVLDSVTPKNIDEIILFLKKEINKTQSKEFD), 397–434 (EVLGNVVPLLMEYLGDSYLPSAVDVVIFLREVVETYPS), 441–479 (KKLIENLSSIKVSKVYRVAVWVIAEYVTCLEDLQYAMTS), 550–575 (LKAQVMMIISVLINLSKASQVSTSKS), and 576–612 (AYERMLSCIQVLIDSNATIKKIWLQDCRDSFANYLKY).

In terms of assembly, oligomeric complex that consists of at least the alpha, beta, beta', gamma, delta, epsilon and zeta subunits.

The protein localises to the cytoplasm. It is found in the golgi apparatus membrane. The protein resides in the cytoplasmic vesicle. It localises to the COPI-coated vesicle membrane. Its function is as follows. The coatomer is a cytosolic protein complex that binds to dilysine motifs and reversibly associates with Golgi non-clathrin-coated vesicles, which further mediate biosynthetic protein transport from the ER, via the Golgi up to the trans Golgi network. Coatomer complex is required for budding from Golgi membranes, and is essential for the retrograde Golgi-to-ER transport of dilysine-tagged proteins. The chain is Coatomer subunit beta (copb) from Dictyostelium discoideum (Social amoeba).